A 354-amino-acid polypeptide reads, in one-letter code: Sphingosine-1-phosphate phosphatase 2 (354 aa).

A run of 4 helical transmembrane segments spans residues 43 to 63 (YLFR…FLPF), 76 to 96 (LVVI…ILKW), 115 to 135 (YGMP…LLIS), and 140 to 160 (YQYP…LVCL). A phosphatase sequence motif I region spans residues 91-99 (KDILKWPRP). Residues 118 to 121 (PSTH) are phosphatase sequence motif II. The Proton donor role is filled by H121. The segment at 161-172 (SRLYTGMHTVLD) is phosphatase sequence motif III. Residue H168 is the Nucleophile of the active site. A run of 5 helical transmembrane segments spans residues 173–193 (ILGG…AWTL), 202–222 (PLFP…YPVS), 235–255 (IVAA…FQLV), 273–293 (TDML…ILLV), and 334–354 (TSVG…LGLL).

Belongs to the type 2 lipid phosphate phosphatase family. In terms of tissue distribution, highly expressed in pancreatic islets. Expressed in lung, small interstince, colon, kideny and brain.

The protein localises to the endoplasmic reticulum membrane. The catalysed reaction is sphinganine 1-phosphate + H2O = sphinganine + phosphate. It catalyses the reaction sphing-4-enine 1-phosphate + H2O = sphing-4-enine + phosphate. The enzyme catalyses (4R)-hydroxysphinganine 1-phosphate + H2O = (4R)-hydroxysphinganine + phosphate. Has specific phosphohydrolase activity towards sphingoid base 1-phosphates. Has high phosphohydrolase activity against dihydrosphingosine-1-phosphate and sphingosine-1-phosphate (S1P) in vitro. Sphingosine-1-phosphate phosphatase activity is needed for efficient recycling of sphingosine into the sphingolipid synthesis pathway. May play a role in attenuating intracellular sphingosine 1-phosphate (S1P) signaling. May play a role in pro-inflammatory signaling. Plays a role in the regulation of pancreatic islet beta-cell endoplasmic reticulum stress and proliferation. In Mus musculus (Mouse), this protein is Sphingosine-1-phosphate phosphatase 2.